A 665-amino-acid polypeptide reads, in one-letter code: Transketolase (665 aa).

Histidine 26 is a substrate binding site. Residues histidine 66 and 114–116 contribute to the thiamine diphosphate site; that span reads GPL. The tract at residues 94–114 is disordered; it reads NSKTPGHPETGETPGVETTTG. Residues 97–114 show a composition bias toward low complexity; that stretch reads TPGHPETGETPGVETTTG. A Mg(2+)-binding site is contributed by aspartate 155. Residues glycine 156 and asparagine 185 each coordinate thiamine diphosphate. Residues asparagine 185 and isoleucine 187 each coordinate Mg(2+). 3 residues coordinate substrate: histidine 261, arginine 358, and serine 385. Histidine 261 is a thiamine diphosphate binding site. Residue glutamate 411 is the Proton donor of the active site. Phenylalanine 437 is a binding site for thiamine diphosphate. Residues histidine 461, aspartate 469, and arginine 520 each contribute to the substrate site.

This sequence belongs to the transketolase family. Homodimer. Mg(2+) is required as a cofactor. Ca(2+) serves as cofactor. Requires Mn(2+) as cofactor. The cofactor is Co(2+). It depends on thiamine diphosphate as a cofactor.

It catalyses the reaction D-sedoheptulose 7-phosphate + D-glyceraldehyde 3-phosphate = aldehydo-D-ribose 5-phosphate + D-xylulose 5-phosphate. In terms of biological role, catalyzes the transfer of a two-carbon ketol group from a ketose donor to an aldose acceptor, via a covalent intermediate with the cofactor thiamine pyrophosphate. The chain is Transketolase (tkt) from Buchnera aphidicola subsp. Acyrthosiphon pisum (strain APS) (Acyrthosiphon pisum symbiotic bacterium).